The primary structure comprises 312 residues: Glycerol-3-phosphate dehydrogenase [NAD(P)+] (312 aa).

NADPH-binding residues include tryptophan 11, arginine 30, arginine 31, and lysine 95. Lysine 95, glycine 123, and serine 125 together coordinate sn-glycerol 3-phosphate. Alanine 127 serves as a coordination point for NADPH. Sn-glycerol 3-phosphate contacts are provided by lysine 177, aspartate 230, serine 240, arginine 241, and asparagine 242. The Proton acceptor role is filled by lysine 177. Arginine 241 serves as a coordination point for NADPH. NADPH is bound by residues valine 265 and glutamate 267.

This sequence belongs to the NAD-dependent glycerol-3-phosphate dehydrogenase family.

Its subcellular location is the cytoplasm. It carries out the reaction sn-glycerol 3-phosphate + NAD(+) = dihydroxyacetone phosphate + NADH + H(+). It catalyses the reaction sn-glycerol 3-phosphate + NADP(+) = dihydroxyacetone phosphate + NADPH + H(+). Its pathway is membrane lipid metabolism; glycerophospholipid metabolism. In terms of biological role, catalyzes the reduction of the glycolytic intermediate dihydroxyacetone phosphate (DHAP) to sn-glycerol 3-phosphate (G3P), the key precursor for phospholipid synthesis. The protein is Glycerol-3-phosphate dehydrogenase [NAD(P)+] of Helicobacter pylori (strain Shi470).